Consider the following 1116-residue polypeptide: Protein STICHEL-like 1 (1116 aa).

Disordered stretches follow at residues 95–138 (RTSS…LEET) and 225–244 (KFLRGTSKREDSSHTCNSTP). The span at 115–124 (NDDDDDDDDV) shows a compositional bias: acidic residues. 2 short sequence motifs (PEST) span residues 257-282 (RNPSTVGSWEDGDDELDDDNLDFKGR) and 402-422 (KSQDGEREEEEEGGSTPESIQ). 463-470 (GPRGTGKT) contributes to the ATP binding site. Zn(2+) is bound by residues cysteine 482, cysteine 492, cysteine 495, and cysteine 498. Residues 726 to 760 (EAFLDRRNLTEADLERLKHALKLLSEAEKQLRVST) adopt a coiled-coil conformation. The tract at residues 777–798 (PSPGTTHTGSSRRQSSRATEES) is disordered. Residues 778-793 (SPGTTHTGSSRRQSSR) are compositionally biased toward polar residues.

Belongs to the DnaX/STICHEL family.

The polypeptide is Protein STICHEL-like 1 (Arabidopsis thaliana (Mouse-ear cress)).